Here is a 143-residue protein sequence, read N- to C-terminus: Small ribosomal subunit protein eS6 (143 aa).

The protein belongs to the eukaryotic ribosomal protein eS6 family.

This chain is Small ribosomal subunit protein eS6, found in Methanoregula boonei (strain DSM 21154 / JCM 14090 / 6A8).